The following is a 230-amino-acid chain: Phosphatidylserine decarboxylase proenzyme (230 aa).

The Schiff-base intermediate with substrate; via pyruvic acid role is filled by serine 186. Serine 186 carries the pyruvic acid (Ser); by autocatalysis modification.

It belongs to the phosphatidylserine decarboxylase family. PSD-A subfamily. Heterodimer of a large membrane-associated beta subunit and a small pyruvoyl-containing alpha subunit. Pyruvate serves as cofactor. Is synthesized initially as an inactive proenzyme. Formation of the active enzyme involves a self-maturation process in which the active site pyruvoyl group is generated from an internal serine residue via an autocatalytic post-translational modification. Two non-identical subunits are generated from the proenzyme in this reaction, and the pyruvate is formed at the N-terminus of the alpha chain, which is derived from the carboxyl end of the proenzyme. The post-translation cleavage follows an unusual pathway, termed non-hydrolytic serinolysis, in which the side chain hydroxyl group of the serine supplies its oxygen atom to form the C-terminus of the beta chain, while the remainder of the serine residue undergoes an oxidative deamination to produce ammonia and the pyruvoyl prosthetic group on the alpha chain.

It localises to the cell membrane. It carries out the reaction a 1,2-diacyl-sn-glycero-3-phospho-L-serine + H(+) = a 1,2-diacyl-sn-glycero-3-phosphoethanolamine + CO2. It participates in phospholipid metabolism; phosphatidylethanolamine biosynthesis; phosphatidylethanolamine from CDP-diacylglycerol: step 2/2. In terms of biological role, catalyzes the formation of phosphatidylethanolamine (PtdEtn) from phosphatidylserine (PtdSer). The polypeptide is Phosphatidylserine decarboxylase proenzyme (Wolbachia pipientis wMel).